Reading from the N-terminus, the 297-residue chain is Homoserine kinase (297 aa).

82-92 (PLTRGLGSSAS) lines the ATP pocket.

It belongs to the GHMP kinase family. Homoserine kinase subfamily.

The protein localises to the cytoplasm. The enzyme catalyses L-homoserine + ATP = O-phospho-L-homoserine + ADP + H(+). It participates in amino-acid biosynthesis; L-threonine biosynthesis; L-threonine from L-aspartate: step 4/5. Catalyzes the ATP-dependent phosphorylation of L-homoserine to L-homoserine phosphate. This Bacillus anthracis (strain CDC 684 / NRRL 3495) protein is Homoserine kinase.